The chain runs to 242 residues: Cell division protein FtsQ (242 aa).

Over 1–12 (MWDNAEAMERLT) the chain is Cytoplasmic. Residues 13–32 (RWLLVMMAMLLAASGLVWFY) form a helical membrane-spanning segment. The Periplasmic segment spans residues 33 to 242 (NSNHLPVKQV…DGLPEKESEE (210 aa)). The 70-residue stretch at 37–106 (LPVKQVSLKG…DTVEVVLTER (70 aa)) folds into the POTRA domain.

The protein belongs to the FtsQ/DivIB family. FtsQ subfamily. Part of a complex composed of FtsB, FtsL and FtsQ.

Its subcellular location is the cell inner membrane. Essential cell division protein. May link together the upstream cell division proteins, which are predominantly cytoplasmic, with the downstream cell division proteins, which are predominantly periplasmic. May control correct divisome assembly. In Neisseria gonorrhoeae (strain ATCC 700825 / FA 1090), this protein is Cell division protein FtsQ.